Here is a 1402-residue protein sequence, read N- to C-terminus: Baculoviral IAP repeat-containing protein 1g (1402 aa).

BIR repeat units follow at residues 60–127 (EAKR…CEFL), 159–227 (EEAR…CEFL), and 278–345 (EELR…CVFL). 4 residues coordinate Zn(2+): cysteine 315, cysteine 318, histidine 335, and cysteine 342. Residues 464-759 (SVMCVEGEAG…EFLAAVRLTE (296 aa)) enclose the NACHT domain. An ATP-binding site is contributed by lysine 476.

Prevents motor-neuron apoptosis induced by a variety of signals. The protein is Baculoviral IAP repeat-containing protein 1g (Naip7) of Mus musculus (Mouse).